A 365-amino-acid polypeptide reads, in one-letter code: 3-dehydroquinate synthase (365 aa).

Residues 69–74 (DGEAHK), 103–107 (GVIGD), 127–128 (TT), K140, and K149 each bind NAD(+). Residues E182, H245, and H262 each coordinate Zn(2+).

The protein belongs to the sugar phosphate cyclases superfamily. Dehydroquinate synthase family. NAD(+) is required as a cofactor. Requires Co(2+) as cofactor. The cofactor is Zn(2+).

The protein localises to the cytoplasm. It catalyses the reaction 7-phospho-2-dehydro-3-deoxy-D-arabino-heptonate = 3-dehydroquinate + phosphate. It participates in metabolic intermediate biosynthesis; chorismate biosynthesis; chorismate from D-erythrose 4-phosphate and phosphoenolpyruvate: step 2/7. Functionally, catalyzes the conversion of 3-deoxy-D-arabino-heptulosonate 7-phosphate (DAHP) to dehydroquinate (DHQ). In Pseudomonas putida (strain ATCC 47054 / DSM 6125 / CFBP 8728 / NCIMB 11950 / KT2440), this protein is 3-dehydroquinate synthase.